Here is a 342-residue protein sequence, read N- to C-terminus: L-threonine 3-dehydrogenase (342 aa).

C38 lines the Zn(2+) pocket. Active-site charge relay system residues include T40 and H43. Residues H63, E64, C93, C96, C99, and C107 each coordinate Zn(2+). Residues I175, D195, R200, 262–264 (LGI), and 286–287 (IY) contribute to the NAD(+) site.

The protein belongs to the zinc-containing alcohol dehydrogenase family. As to quaternary structure, homotetramer. The cofactor is Zn(2+).

Its subcellular location is the cytoplasm. It catalyses the reaction L-threonine + NAD(+) = (2S)-2-amino-3-oxobutanoate + NADH + H(+). Its pathway is amino-acid degradation; L-threonine degradation via oxydo-reductase pathway; glycine from L-threonine: step 1/2. Functionally, catalyzes the NAD(+)-dependent oxidation of L-threonine to 2-amino-3-ketobutyrate. This chain is L-threonine 3-dehydrogenase, found in Burkholderia ambifaria (strain MC40-6).